Reading from the N-terminus, the 220-residue chain is Ribose-5-phosphate isomerase A (220 aa).

Substrate-binding positions include 28-31, 81-84, and 94-97; these read TGST, DGAD, and KGGG. The active-site Proton acceptor is Glu-103. Substrate is bound at residue Lys-121.

This sequence belongs to the ribose 5-phosphate isomerase family. Homodimer.

The catalysed reaction is aldehydo-D-ribose 5-phosphate = D-ribulose 5-phosphate. It functions in the pathway carbohydrate degradation; pentose phosphate pathway; D-ribose 5-phosphate from D-ribulose 5-phosphate (non-oxidative stage): step 1/1. In terms of biological role, catalyzes the reversible conversion of ribose-5-phosphate to ribulose 5-phosphate. The chain is Ribose-5-phosphate isomerase A from Shewanella baltica (strain OS223).